A 905-amino-acid chain; its full sequence is DNA-directed RNA polymerase subunit Rpo1N (905 aa).

Residues cysteine 60, cysteine 63, cysteine 70, histidine 73, cysteine 100, cysteine 103, cysteine 147, and cysteine 150 each contribute to the Zn(2+) site. Mg(2+) contacts are provided by aspartate 461, aspartate 463, and aspartate 465.

This sequence belongs to the RNA polymerase beta' chain family. Part of the RNA polymerase complex. Mg(2+) serves as cofactor. It depends on Zn(2+) as a cofactor.

Its subcellular location is the cytoplasm. It catalyses the reaction RNA(n) + a ribonucleoside 5'-triphosphate = RNA(n+1) + diphosphate. Functionally, DNA-dependent RNA polymerase (RNAP) catalyzes the transcription of DNA into RNA using the four ribonucleoside triphosphates as substrates. Forms the clamp head domain. This chain is DNA-directed RNA polymerase subunit Rpo1N, found in Thermococcus celer.